A 144-amino-acid polypeptide reads, in one-letter code: Large ribosomal subunit protein uL13 (144 aa).

This sequence belongs to the universal ribosomal protein uL13 family. In terms of assembly, part of the 50S ribosomal subunit.

This protein is one of the early assembly proteins of the 50S ribosomal subunit, although it is not seen to bind rRNA by itself. It is important during the early stages of 50S assembly. This Lawsonia intracellularis (strain PHE/MN1-00) protein is Large ribosomal subunit protein uL13.